Consider the following 278-residue polypeptide: NH(3)-dependent NAD(+) synthetase (278 aa).

39 to 46 (GVSGGVDS) contacts ATP. Asp-45 contacts Mg(2+). Arg-121 is a binding site for deamido-NAD(+). Thr-141 contacts ATP. Glu-146 is a binding site for Mg(2+). 2 residues coordinate deamido-NAD(+): Lys-154 and Asp-161. 2 residues coordinate ATP: Lys-170 and Ser-192. Position 252 to 253 (252 to 253 (HK)) interacts with deamido-NAD(+).

This sequence belongs to the NAD synthetase family. In terms of assembly, homodimer.

It catalyses the reaction deamido-NAD(+) + NH4(+) + ATP = AMP + diphosphate + NAD(+) + H(+). The protein operates within cofactor biosynthesis; NAD(+) biosynthesis; NAD(+) from deamido-NAD(+) (ammonia route): step 1/1. Its function is as follows. Catalyzes the ATP-dependent amidation of deamido-NAD to form NAD. Uses ammonia as a nitrogen source. The protein is NH(3)-dependent NAD(+) synthetase of Saccharolobus solfataricus (strain ATCC 35092 / DSM 1617 / JCM 11322 / P2) (Sulfolobus solfataricus).